We begin with the raw amino-acid sequence, 350 residues long: Arabinogalactan endo-beta-1,4-galactanase A (350 aa).

A signal peptide spans Met1–Ala16. Asn128 is a glycosylation site (N-linked (GlcNAc...) asparagine). The active-site Proton donor is the Glu152. Glu262 functions as the Nucleophile in the catalytic mechanism.

It belongs to the glycosyl hydrolase 53 family.

It is found in the secreted. The enzyme catalyses The enzyme specifically hydrolyzes (1-&gt;4)-beta-D-galactosidic linkages in type I arabinogalactans.. Functionally, endogalactanase involved in the degradation of plant cell wall polysaccharides, and more particularly of hairy regions of pectin. The polypeptide is Arabinogalactan endo-beta-1,4-galactanase A (galA) (Aspergillus niger).